The chain runs to 228 residues: MNKFFLAPSILSADFARLGEDIKKVIDAGSDLIHFDVMDNHYVPNLSMGPMILESLRNYNITAPIDVHLMVKPVDNLIPQFAKAGATFITFHPEATLHIERTLNLIKENGCKAGLAFNPATPLNFLDYILEKLDLILLMSVNPGFGNQSFLPSTFNKLREVRKIIDANFSDILLEVDGGVKLDNIADIACAGANVFVMGSGLFKYSNYKLVIEKIRKKLEYAHSRSIH.

Serine 9 is a binding site for substrate. Histidine 34, aspartate 36, histidine 68, and aspartate 177 together coordinate a divalent metal cation. Residue aspartate 36 is the Proton acceptor of the active site. Substrate contacts are provided by residues histidine 68, 177-179 (DGG), and 199-200 (GS). Catalysis depends on aspartate 177, which acts as the Proton donor.

The protein belongs to the ribulose-phosphate 3-epimerase family. A divalent metal cation serves as cofactor.

It carries out the reaction D-ribulose 5-phosphate = D-xylulose 5-phosphate. Its pathway is carbohydrate degradation. In terms of biological role, catalyzes the reversible epimerization of D-ribulose 5-phosphate to D-xylulose 5-phosphate. The polypeptide is Ribulose-phosphate 3-epimerase (Buchnera aphidicola subsp. Acyrthosiphon pisum (strain APS) (Acyrthosiphon pisum symbiotic bacterium)).